Here is an 825-residue protein sequence, read N- to C-terminus: Lon protease (825 aa).

The region spanning Leu41–Lys237 is the Lon N-terminal domain. Gly388 to Thr395 provides a ligand contact to ATP. Positions Ser625 to Leu805 constitute a Lon proteolytic domain. Residues Ser711 and Lys754 contribute to the active site.

It belongs to the peptidase S16 family. As to quaternary structure, homohexamer. Organized in a ring with a central cavity.

It localises to the cytoplasm. The catalysed reaction is Hydrolysis of proteins in presence of ATP.. Its function is as follows. ATP-dependent serine protease that mediates the selective degradation of mutant and abnormal proteins as well as certain short-lived regulatory proteins. Required for cellular homeostasis and for survival from DNA damage and developmental changes induced by stress. Degrades polypeptides processively to yield small peptide fragments that are 5 to 10 amino acids long. Binds to DNA in a double-stranded, site-specific manner. The sequence is that of Lon protease from Methanosphaera stadtmanae (strain ATCC 43021 / DSM 3091 / JCM 11832 / MCB-3).